We begin with the raw amino-acid sequence, 439 residues long: 3-phosphoshikimate 1-carboxyvinyltransferase (439 aa).

3-phosphoshikimate is bound by residues Lys-29, Ser-30, and Arg-34. Lys-29 serves as a coordination point for phosphoenolpyruvate. Gly-100 and Arg-128 together coordinate phosphoenolpyruvate. 3-phosphoshikimate is bound by residues Ser-173, Ser-174, Gln-175, Ser-201, Asp-321, and Lys-348. Residue Gln-175 coordinates phosphoenolpyruvate. The active-site Proton acceptor is the Asp-321. Residues Arg-352 and Arg-395 each contribute to the phosphoenolpyruvate site.

It belongs to the EPSP synthase family. In terms of assembly, monomer.

Its subcellular location is the cytoplasm. It catalyses the reaction 3-phosphoshikimate + phosphoenolpyruvate = 5-O-(1-carboxyvinyl)-3-phosphoshikimate + phosphate. It functions in the pathway metabolic intermediate biosynthesis; chorismate biosynthesis. Catalyzes the transfer of the enolpyruvyl moiety of phosphoenolpyruvate (PEP) to the 5-hydroxyl of shikimate-3-phosphate (S3P) to produce enolpyruvyl shikimate-3-phosphate and inorganic phosphate. The protein is 3-phosphoshikimate 1-carboxyvinyltransferase of Halobacterium salinarum (strain ATCC 700922 / JCM 11081 / NRC-1) (Halobacterium halobium).